A 724-amino-acid chain; its full sequence is Pediocin PA-1 transport/processing ATP-binding protein PedD (724 aa).

In terms of domain architecture, Peptidase C39 spans 13–140; sequence QVDENDCGLA…KEWTQIAIII (128 aa). Cysteine 19 is an active-site residue. A run of 6 helical transmembrane segments spans residues 170-190, 207-227, 284-304, 307-327, 396-416, and 426-446; these read IGLI…GAYF, LSLV…INYI, TTLT…FLAY, INLF…VWLF, IKAA…TFFV, and LLTY…IINL. The 283-residue stretch at 170-452 folds into the ABC transmembrane type-1 domain; sequence IGLIITAAAI…IINLQPKLQA (283 aa). The 237-residue stretch at 486-722 folds into the ABC transporter domain; sequence IEVNHVSFNY…NGYYARLIHN (237 aa). An ATP-binding site is contributed by 519-526; that stretch reads GMSGSGKT.

This sequence belongs to the ABC transporter superfamily. Pediocin PA-1 exporter (TC 3.A.1.112.2) family.

The protein resides in the cell membrane. Involved in the export process of the bacteriocin pediocin PA-1/AcH. Is also essential for pediocin production. The polypeptide is Pediocin PA-1 transport/processing ATP-binding protein PedD (pedD) (Pediococcus acidilactici).